A 776-amino-acid polypeptide reads, in one-letter code: MATEYGDDDGGLYFHSTQMQSIHESLQQEENQRLYLQTSIKKLESFKHVNNDSSNNSNSGAVSVVQIKKKAATKKRKLMARKPNVKKPKSSSEAVRQAFEKDKFAYFTNNQAKIDDFLPGKSTSTEPSTSNQGSLISSDEWNYIKQIYLQKPTKNKTTLKSIRKRIKQYENSGTGMWEIAALNVDVSLNDEDIQHLYALDEEQMVSDDNSSTEDDTDPTQNDGLILTLSQNCSTQRDICHHEKDDQKYILIDSSICETYQQDKSLQRHSQKDSDNGNTIPDQNSAITIGEMESTAAHEVEEIFSTPSYVPSNKLNADQDRSDESESSIIMLADNIVSTQPDIVESISDSESEIEIIERPRLQVLRSVYENGTSTNQTRQELTMPKCLENNKISENEEYESEVVESDSTPIITPVVTPTKKPHIFPTNEPAIPIALRSTPNKIKNNVDRIFGSPSPIKLVLESPLKKHINIEFSDSESIYSTAVSQFGTPKQTTSFSPEVLTQKVGSPPLDACSDSGPTGVVSSMPYKKPHSTKRLRTTTLEISAALRVKNYTDPKNNITVKKFGEEIKREFIDLDNEIPDSESSDDDTGFSIIEITRQVEECKEPANDDYSEEQSTDLFQIGLKNKQETGNTSHMQVPSSPELQFENAGNTFLNSSLVEEDEFTKLKATELRERFKDWGLKPVQRKDKMLEILQGISDFISPESLLALKGFDLQQCVFDKLELLIKQDQFWYDRILTFEPIRLEELKQWLNSHNHHLELDILRLYCDRNCITTTNT.

Acidic residues predominate over residues E201–D217. 3 disordered regions span residues E201–G223, K263–N283, and P507–S531.

Belongs to the SLX4 family. Forms a heterodimer with SLX1. In terms of processing, phosphorylated in response to DNA damage.

It localises to the nucleus. Functionally, regulatory subunit of the SLX1-SLX4 structure-specific endonuclease that resolves DNA secondary structures generated during DNA repair and recombination. Has endonuclease activity towards branched DNA substrates, introducing single-strand cuts in duplex DNA close to junctions with ss-DNA. This Candida albicans (strain SC5314 / ATCC MYA-2876) (Yeast) protein is Structure-specific endonuclease subunit SLX4.